We begin with the raw amino-acid sequence, 615 residues long: Mitochondrial distribution and morphology protein 34 (615 aa).

The 195-residue stretch at 1–195 folds into the SMP-LTD domain; the sequence is MAFNFNWSPL…LPAIIHRLSL (195 aa). Disordered regions lie at residues 293 to 313, 346 to 566, and 596 to 615; these read SDKP…RTSS, ATTG…PQPD, and PAFW…YEPR. Residues 301–313 show a composition bias toward polar residues; it reads TPASTPNLHRTSS. Over residues 346–355 the composition is skewed to low complexity; sequence ATTGLSLGSG. The span at 356–367 shows a compositional bias: basic residues; that stretch reads RHSKAGRKKKMR. Composition is skewed to polar residues over residues 384-403, 435-446, and 457-499; these read IGST…TRTP, DATTSARASESS, and VTAQ…YSSR. The span at 517–557 shows a compositional bias: low complexity; the sequence is QQQQFQQQQQQQQQQQQQQQQQQQQQQQQQQQQQQQQQQQQ. Positions 596–606 are enriched in basic and acidic residues; the sequence is PAFWEDSHQHD.

This sequence belongs to the MDM34 family. As to quaternary structure, component of the ER-mitochondria encounter structure (ERMES) or MDM complex, composed of mmm-1, mdm10, mdm12 and mdm34.

It localises to the mitochondrion outer membrane. Functionally, component of the ERMES/MDM complex, which serves as a molecular tether to connect the endoplasmic reticulum (ER) and mitochondria. Components of this complex are involved in the control of mitochondrial shape and protein biogenesis, and function in nonvesicular lipid trafficking between the ER and mitochondria. Mdm34 is required for the interaction of the ER-resident membrane protein mmm-1 and the outer mitochondrial membrane-resident beta-barrel protein mdm10. This chain is Mitochondrial distribution and morphology protein 34, found in Neurospora crassa (strain ATCC 24698 / 74-OR23-1A / CBS 708.71 / DSM 1257 / FGSC 987).